A 442-amino-acid polypeptide reads, in one-letter code: tRNA-2-methylthio-N(6)-dimethylallyladenosine synthase (442 aa).

The 118-residue stretch at 5 to 122 (KKVFIKTLGC…LPEMIKRKQS (118 aa)) folds into the MTTase N-terminal domain. The [4Fe-4S] cluster site is built by cysteine 14, cysteine 51, cysteine 85, cysteine 159, cysteine 163, and cysteine 166. One can recognise a Radical SAM core domain in the interval 145–378 (KAEGAKAYVS…DLLNSNAQII (234 aa)). In terms of domain architecture, TRAM spans 380–442 (RQMVGTEQRI…LPNSLRGELI (63 aa)).

The protein belongs to the methylthiotransferase family. MiaB subfamily. Monomer. It depends on [4Fe-4S] cluster as a cofactor.

The protein localises to the cytoplasm. The enzyme catalyses N(6)-dimethylallyladenosine(37) in tRNA + (sulfur carrier)-SH + AH2 + 2 S-adenosyl-L-methionine = 2-methylsulfanyl-N(6)-dimethylallyladenosine(37) in tRNA + (sulfur carrier)-H + 5'-deoxyadenosine + L-methionine + A + S-adenosyl-L-homocysteine + 2 H(+). Functionally, catalyzes the methylthiolation of N6-(dimethylallyl)adenosine (i(6)A), leading to the formation of 2-methylthio-N6-(dimethylallyl)adenosine (ms(2)i(6)A) at position 37 in tRNAs that read codons beginning with uridine. The sequence is that of tRNA-2-methylthio-N(6)-dimethylallyladenosine synthase from Francisella philomiragia subsp. philomiragia (strain ATCC 25017 / CCUG 19701 / FSC 153 / O#319-036).